Consider the following 180-residue polypeptide: Nascent polypeptide-associated complex subunit alpha (180 aa).

The NAC-A/B domain maps to 16 to 80 (SKNEKKAREL…AKVDDMNKRI (65 aa)). The segment at 81–113 (AEAQQQQAQQDALSKAAGETGEAGEEDKSQDAI) is disordered. Over residues 82-100 (EAQQQQAQQDALSKAAGET) the composition is skewed to low complexity. The UBA domain occupies 142-179 (LDAKDIDIIVEQTQVSRAKAVKALRVHDGDMVNAIMEL).

This sequence belongs to the NAC-alpha family. Part of the nascent polypeptide-associated complex (NAC), consisting of EGD2 and EGD1. NAC associates with ribosomes via EGD1.

The protein resides in the cytoplasm. The protein localises to the nucleus. Functionally, component of the nascent polypeptide-associated complex (NAC), a dynamic component of the ribosomal exit tunnel, protecting the emerging polypeptides from interaction with other cytoplasmic proteins to ensure appropriate nascent protein targeting. The NAC complex also promotes mitochondrial protein import by enhancing productive ribosome interactions with the outer mitochondrial membrane and blocks the inappropriate interaction of ribosomes translating non-secretory nascent polypeptides with translocation sites in the membrane of the endoplasmic reticulum. EGD2 may also be involved in transcription regulation. This Debaryomyces hansenii (strain ATCC 36239 / CBS 767 / BCRC 21394 / JCM 1990 / NBRC 0083 / IGC 2968) (Yeast) protein is Nascent polypeptide-associated complex subunit alpha (EGD2).